Consider the following 282-residue polypeptide: Pantothenate synthetase (282 aa).

31 to 38 lines the ATP pocket; that stretch reads MGYLHEGH. The active-site Proton donor is His-38. A (R)-pantoate-binding site is contributed by Gln-62. Position 62 (Gln-62) interacts with beta-alanine. Position 148-151 (148-151) interacts with ATP; that stretch reads GEKD. Residue Gln-154 participates in (R)-pantoate binding. ATP contacts are provided by residues Val-177 and 185–188; that span reads YSSR.

Belongs to the pantothenate synthetase family. In terms of assembly, homodimer.

It localises to the cytoplasm. The enzyme catalyses (R)-pantoate + beta-alanine + ATP = (R)-pantothenate + AMP + diphosphate + H(+). Its pathway is cofactor biosynthesis; (R)-pantothenate biosynthesis; (R)-pantothenate from (R)-pantoate and beta-alanine: step 1/1. Functionally, catalyzes the condensation of pantoate with beta-alanine in an ATP-dependent reaction via a pantoyl-adenylate intermediate. The chain is Pantothenate synthetase from Aquifex aeolicus (strain VF5).